The sequence spans 197 residues: Probable GTP-binding protein EngB (197 aa).

An EngB-type G domain is found at Ser-25 to Arg-197. GTP is bound by residues Gly-33–Ser-40, Gly-60–Gln-64, Asp-79–Gly-82, Thr-146–Asp-149, and Ile-177–Ile-179. The Mg(2+) site is built by Ser-40 and Thr-62.

It belongs to the TRAFAC class TrmE-Era-EngA-EngB-Septin-like GTPase superfamily. EngB GTPase family. The cofactor is Mg(2+).

In terms of biological role, necessary for normal cell division and for the maintenance of normal septation. The chain is Probable GTP-binding protein EngB from Wolbachia pipientis subsp. Culex pipiens (strain wPip).